The primary structure comprises 220 residues: Thiopurine S-methyltransferase (220 aa).

The S-adenosyl-L-methionine site is built by tryptophan 10, leucine 45, glutamate 66, and arginine 123.

It belongs to the class I-like SAM-binding methyltransferase superfamily. TPMT family.

The protein resides in the cytoplasm. It catalyses the reaction S-adenosyl-L-methionine + a thiopurine = S-adenosyl-L-homocysteine + a thiopurine S-methylether.. This is Thiopurine S-methyltransferase from Pseudomonas syringae pv. tomato (strain ATCC BAA-871 / DC3000).